An 872-amino-acid chain; its full sequence is Alanine--tRNA ligase (872 aa).

Zn(2+) contacts are provided by His-567, His-571, Cys-669, and His-673.

It belongs to the class-II aminoacyl-tRNA synthetase family. The cofactor is Zn(2+).

The protein resides in the cytoplasm. The catalysed reaction is tRNA(Ala) + L-alanine + ATP = L-alanyl-tRNA(Ala) + AMP + diphosphate. Its function is as follows. Catalyzes the attachment of alanine to tRNA(Ala) in a two-step reaction: alanine is first activated by ATP to form Ala-AMP and then transferred to the acceptor end of tRNA(Ala). Also edits incorrectly charged Ser-tRNA(Ala) and Gly-tRNA(Ala) via its editing domain. The protein is Alanine--tRNA ligase of Streptococcus thermophilus (strain ATCC BAA-491 / LMD-9).